The primary structure comprises 279 residues: 30 kDa ribonucleoprotein, chloroplastic (279 aa).

The 79-residue stretch at 87-165 (LKIFVGNLLF…RALRVNSGPP (79 aa)) folds into the RRM 1 domain. A disordered region spans residues 156–187 (RALRVNSGPPPEKRENSSFRENSSFRGGSRGG). Residues 166–193 (PEKRENSSFRENSSFRGGSRGGGSFDSS) form a linker (Gly-rich) region. One can recognise an RRM 2 domain in the interval 194–272 (NRVYVGNLAW…RAIRVSPAEA (79 aa)).

As to expression, expressed at high levels in the leaves and seedlings, and lower levels are seen in the stems and roots.

It localises to the plastid. The protein resides in the chloroplast. In terms of biological role, could be involved in splicing and/or processing of chloroplast RNA's. This is 30 kDa ribonucleoprotein, chloroplastic from Nicotiana plumbaginifolia (Leadwort-leaved tobacco).